Consider the following 102-residue polypeptide: Trp operon repressor homolog (102 aa).

Residues 59–82 (QRQISQMLGVGIATITRGSNELKL) mediate DNA binding.

The protein belongs to the TrpR family. Homodimer.

It is found in the cytoplasm. This protein is an aporepressor. When complexed with L-tryptophan it binds the operator region of the trp operon and prevents the initiation of transcription. This chain is Trp operon repressor homolog, found in Vibrio vulnificus (strain CMCP6).